The primary structure comprises 296 residues: Porphobilinogen deaminase (296 aa).

The residue at position 235 (cysteine 235) is an S-(dipyrrolylmethanemethyl)cysteine.

The protein belongs to the HMBS family. Monomer. Dipyrromethane serves as cofactor.

The catalysed reaction is 4 porphobilinogen + H2O = hydroxymethylbilane + 4 NH4(+). The protein operates within porphyrin-containing compound metabolism; protoporphyrin-IX biosynthesis; coproporphyrinogen-III from 5-aminolevulinate: step 2/4. Functionally, tetrapolymerization of the monopyrrole PBG into the hydroxymethylbilane pre-uroporphyrinogen in several discrete steps. The polypeptide is Porphobilinogen deaminase (Alkaliphilus oremlandii (strain OhILAs) (Clostridium oremlandii (strain OhILAs))).